The following is a 209-amino-acid chain: Casparian strip membrane protein 1 (209 aa).

A disordered region spans residues 1–35; the sequence is MKTGESTAIDIAPETNNSGPIGKKKSTTPLLAAPV. The Cytoplasmic portion of the chain corresponds to 1-46; sequence MKTGESTAIDIAPETNNSGPIGKKKSTTPLLAAPVPDRGTHRMKRG. Residues 47–67 traverse the membrane as a helical segment; that stretch reads LAIFDFVLRIGVLASALAAAA. Over 68–96 the chain is Extracellular; that stretch reads AMGTSEQTLPFFTQFFQFEASYDDLPTFQ. Residues 97–117 form a helical membrane-spanning segment; sequence FFVVAMAVVAGYVVLSIPFSI. Residues 118-129 are Cytoplasmic-facing; sequence VCIIRPHAAGPR. Residues 130–150 traverse the membrane as a helical segment; the sequence is VLLLILDSVALTLNTAAAGAA. The Extracellular segment spans residues 151-182; that stretch reads AAVVSLAHSGNSSTNWLAICNQFGDFCQQASG. An N-linked (GlcNAc...) asparagine glycan is attached at Asn-161. The chain crosses the membrane as a helical span at residues 183-203; that stretch reads AVVGSFAAVLLFLLLILFSAL. At 204–209 the chain is on the cytoplasmic side; the sequence is SLKNSH.

The protein belongs to the Casparian strip membrane proteins (CASP) family. Homodimer and heterodimers.

The protein localises to the cell membrane. Functionally, regulates membrane-cell wall junctions and localized cell wall deposition. Required for establishment of the Casparian strip membrane domain (CSD) and the subsequent formation of Casparian strips, a cell wall modification of the root endodermis that determines an apoplastic barrier between the intraorganismal apoplasm and the extraorganismal apoplasm and prevents lateral diffusion. In Cucumis melo (Muskmelon), this protein is Casparian strip membrane protein 1.